Here is a 149-residue protein sequence, read N- to C-terminus: Large ribosomal subunit protein bL9 (149 aa).

It belongs to the bacterial ribosomal protein bL9 family.

Its function is as follows. Binds to the 23S rRNA. This chain is Large ribosomal subunit protein bL9, found in Aliivibrio salmonicida (strain LFI1238) (Vibrio salmonicida (strain LFI1238)).